Consider the following 297-residue polypeptide: Probable GTP 3',8-cyclase (297 aa).

In terms of domain architecture, Radical SAM core spans 4–220; sequence EFGREIRSFR…VVTRKFMQNR (217 aa). Arg-13 is a GTP binding site. Residues Cys-20 and Cys-24 each contribute to the [4Fe-4S] cluster site. Residue Tyr-26 participates in S-adenosyl-L-methionine binding. Cys-27 lines the [4Fe-4S] cluster pocket. Residue Lys-61 participates in GTP binding. An S-adenosyl-L-methionine-binding site is contributed by Gly-65. Residue Thr-91 participates in GTP binding. Residue Ser-115 participates in S-adenosyl-L-methionine binding. Position 151 (Lys-151) interacts with GTP. [4Fe-4S] cluster contacts are provided by Cys-242 and Cys-245. 247–249 contacts GTP; that stretch reads RIR. Cys-259 provides a ligand contact to [4Fe-4S] cluster.

It belongs to the radical SAM superfamily. MoaA family. The cofactor is [4Fe-4S] cluster.

It carries out the reaction GTP + AH2 + S-adenosyl-L-methionine = (8S)-3',8-cyclo-7,8-dihydroguanosine 5'-triphosphate + 5'-deoxyadenosine + L-methionine + A + H(+). Its pathway is cofactor biosynthesis; molybdopterin biosynthesis. In terms of biological role, catalyzes the cyclization of GTP to (8S)-3',8-cyclo-7,8-dihydroguanosine 5'-triphosphate. The chain is Probable GTP 3',8-cyclase from Methanococcus vannielii (strain ATCC 35089 / DSM 1224 / JCM 13029 / OCM 148 / SB).